The following is a 418-amino-acid chain: Pigment epithelium-derived factor (418 aa).

The first 19 residues, 1 to 19 (MQALVLLLCIGALLGHSSC), serve as a signal peptide directing secretion. Q20 carries the post-translational modification Pyrrolidone carboxylic acid. Residues 20-39 (QNPASPPEEGSPDPDSTGAL) form a disordered region. 2 positions are modified to phosphoserine; by CK2: S24 and S114. S227 is subject to Phosphoserine; by PKA. N-linked (GlcNAc...) (complex) asparagine glycosylation is present at N285. The segment at 371 to 383 (TTPSPGLQPAHLT) is O-glycosylated at one site.

The protein belongs to the serpin family. Interacts with PNPLA2; this interaction stimulates the phospholipase A2 activity of PNPLA2. Post-translationally, the N-terminus is blocked. Extracellular phosphorylation enhances antiangiogenic activity. In terms of processing, N- and O-glycosylated. O-glycosylated with a core 1 or possibly core 8 glycan. In terms of tissue distribution, retinal pigment epithelial cells and blood plasma.

It is found in the secreted. Its subcellular location is the melanosome. Its function is as follows. Neurotrophic protein; induces extensive neuronal differentiation in retinoblastoma cells. Potent inhibitor of angiogenesis. As it does not undergo the S (stressed) to R (relaxed) conformational transition characteristic of active serpins, it exhibits no serine protease inhibitory activity. The polypeptide is Pigment epithelium-derived factor (SERPINF1) (Homo sapiens (Human)).